The primary structure comprises 703 residues: MFKSFSMELAGRTLTVETGKLAQLANGSALIRYGDTVIMSSATASAAPRDGIDFFPLSVDYEERLYAVGKIPGGFIKREGKPSEKAILTSRVIDRPIRPLFPKDLRNDVAVVNTVMSVEQDNSPEIAAMIGASVAISISDIPFNGPIGGVVLGLVDGEVIINPNEEQRAKSKMYVTLAGTKEKITMIEAGADIVPDDVMFDAIKKGHEEIKKICDFINGIVKEVGKAKFTYESADVPADLFEVVKEFAYDKMRIAVLATDKQDRDAKVSQLTEETQAALAEQFPEMESKINDALYKLEKKVVREYILKEGKRIDGRRLDEIRTLSAEVGILPRTHGSGLFERGQTQVLTTVTLGAMGDVQMLDGIDTEETKRYMHHYNFPGYSVGEAKTSRGPGRREIGHGALAERSLVPVIPTETEFPYAFRLVSEVLMSNGSTSQGSVCGSTLALMDAGVPIKAPVAGISAGLVIDEENPDNFVTFMDIQGIEDFFGDMDFKVAGTTEGITAIQMDIKVDGLSYEIIRQAFELTRMGRLQIINDVILKAIPQPRKELSEYAPKIITTNIDPEKIRDVIGPGGKMINKIIAETGVKIDIEEDGRVYILTPDSAAAQKALKIIQGIAKDIEPGEVYLGKVVRITTFGAFVEILPGKDGLVHISKLDKKRVEKVEDVVSIGDEILVKVTEIDKQGRINLSRKDAMAEENTTEEK.

Residues Asp-486 and Asp-492 each contribute to the Mg(2+) site. Residues 554–613 (PKIITTNIDPEKIRDVIGPGGKMINKIIAETGVKIDIEEDGRVYILTPDSAAAQKALKII) enclose the KH domain. An S1 motif domain is found at 623–691 (GEVYLGKVVR…KQGRINLSRK (69 aa)).

It belongs to the polyribonucleotide nucleotidyltransferase family. The cofactor is Mg(2+).

Its subcellular location is the cytoplasm. The enzyme catalyses RNA(n+1) + phosphate = RNA(n) + a ribonucleoside 5'-diphosphate. In terms of biological role, involved in mRNA degradation. Catalyzes the phosphorolysis of single-stranded polyribonucleotides processively in the 3'- to 5'-direction. This chain is Polyribonucleotide nucleotidyltransferase, found in Ruminiclostridium cellulolyticum (strain ATCC 35319 / DSM 5812 / JCM 6584 / H10) (Clostridium cellulolyticum).